The sequence spans 490 residues: Phosphoglucosamine mutase (490 aa).

Ser-139 serves as the catalytic Phosphoserine intermediate. Mg(2+) contacts are provided by Ser-139, Asp-279, Asp-281, and Asp-283. Residue Ser-139 is modified to Phosphoserine.

The protein belongs to the phosphohexose mutase family. The cofactor is Mg(2+). Activated by phosphorylation.

It carries out the reaction alpha-D-glucosamine 1-phosphate = D-glucosamine 6-phosphate. In terms of biological role, catalyzes the conversion of glucosamine-6-phosphate to glucosamine-1-phosphate. In Nostoc punctiforme (strain ATCC 29133 / PCC 73102), this protein is Phosphoglucosamine mutase.